A 323-amino-acid chain; its full sequence is Zinc finger C2HC domain-containing protein 1A (323 aa).

A C2HC/C3H-type 1 zinc finger spans residues 7–36 (ELRPCKICGRTFFPATLKKHVPICQKTSVK). Cys-11, Cys-14, His-26, and Cys-30 together coordinate Zn(2+). Residues 35-75 (VKKRKTFESSRQRAEGTDINTVKPVKPRPEPPKKQSNWKRK) form a disordered region. A compositionally biased stretch (basic and acidic residues) spans 40-50 (TFESSRQRAEG). The C2HC/C3H-type 2 zinc-finger motif lies at 110–139 (DYVQCPYCQRRFNQNAADRHINFCKEQSAR). Cys-114, Cys-117, His-129, and Cys-133 together coordinate Zn(2+). Residues 138–273 (ARMGQKIKGG…EAAMGYDSSD (136 aa)) are disordered. Residues 208-226 (KYQTQSPAHKNSTMVTSPQ) are compositionally biased toward polar residues.

This sequence belongs to the ZC2HC1 family. It depends on Zn(2+) as a cofactor.

The polypeptide is Zinc finger C2HC domain-containing protein 1A (zc2hc1a) (Xenopus laevis (African clawed frog)).